The sequence spans 563 residues: MWAVLRLALRPCARASPAGPRAYHGDSVASLGTQPDLGSALYQENYKQMKALVNQLHERVEHIKLGGGEKARALHISRGKLLPRERIDNLIDPGSPFLELSQFAGYQLYDNEEVPGGGIITGIGRVSGVECMIIANDATVKGGAYYPVTVKKQLRAQEIAMQNRLPCIYLVDSGGAYLPRQADVFPDRDHFGRTFYNQAIMSSKNIAQIAVVMGSCTAGGAYVPAMADENIIVRKQGTIFLAGPPLVKAATGEEVSAEDLGGADLHCRKSGVSDHWALDDHHALHLTRKVVRNLNYQKKLDVTIEPSEEPLFPADELYGIVGANLKRSFDVREVIARIVDGSRFTEFKAFYGDTLVTGFARIFGYPVGIVGNNGVLFSESAKKGTHFVQLCCQRNIPLLFLQNITGFMVGREYEAEGIAKDGAKMVAAVACAQVPKITLIIGGSYGAGNYGMCGRAYSPRFLYIWPNARISVMGGEQAANVLATITKDQRAREGKQFSSADEAALKEPIIKKFEEEGNPYYSSARVWDDGIIDPADTRLVLGLSFSAALNAPIEKTDFGIFRM.

The transit peptide at methionine 1–alanine 22 directs the protein to the mitochondrion. The CoA carboxyltransferase N-terminal domain occupies methionine 49–proline 306. Residues methionine 49–lysine 555 form a carboxyltransferase region. N6-acetyllysine; alternate is present on lysine 70. Lysine 70 is subject to N6-succinyllysine; alternate. Position 141 is an N6-succinyllysine (lysine 141). The CoA carboxyltransferase C-terminal domain occupies glutamate 309 to lysine 555. The acyl-CoA binding stretch occupies residues arginine 343–asparagine 372. Residue lysine 495 is modified to N6-acetyllysine; alternate. Residue lysine 495 is modified to N6-succinyllysine; alternate. Lysine 511 bears the N6-acetyllysine mark.

This sequence belongs to the AccD/PCCB family. Probably a dodecamer composed of six biotin-containing alpha subunits (MCCC1) and six beta (MCCC2) subunits.

It is found in the mitochondrion matrix. The catalysed reaction is 3-methylbut-2-enoyl-CoA + hydrogencarbonate + ATP = 3-methyl-(2E)-glutaconyl-CoA + ADP + phosphate + H(+). It participates in amino-acid degradation; L-leucine degradation; (S)-3-hydroxy-3-methylglutaryl-CoA from 3-isovaleryl-CoA: step 2/3. In terms of biological role, carboxyltransferase subunit of the 3-methylcrotonyl-CoA carboxylase, an enzyme that catalyzes the conversion of 3-methylcrotonyl-CoA to 3-methylglutaconyl-CoA, a critical step for leucine and isovaleric acid catabolism. The sequence is that of Methylcrotonoyl-CoA carboxylase beta chain, mitochondrial (MCCC2) from Homo sapiens (Human).